We begin with the raw amino-acid sequence, 143 residues long: Small ribosomal subunit protein uS9 (143 aa).

The disordered stretch occupies residues 118–143 (DSRRTEPHKPNRSTKGPRAKRQKSYR). The segment covering 127–143 (PNRSTKGPRAKRQKSYR) has biased composition (basic residues).

It belongs to the universal ribosomal protein uS9 family.

This Thermococcus sibiricus (strain DSM 12597 / MM 739) protein is Small ribosomal subunit protein uS9.